Consider the following 943-residue polypeptide: Aconitate hydratase A (943 aa).

Residues cysteine 479, cysteine 545, and cysteine 548 each contribute to the [4Fe-4S] cluster site.

This sequence belongs to the aconitase/IPM isomerase family. In terms of assembly, monomer. It depends on [4Fe-4S] cluster as a cofactor.

The enzyme catalyses citrate = D-threo-isocitrate. The catalysed reaction is (2S,3R)-3-hydroxybutane-1,2,3-tricarboxylate = 2-methyl-cis-aconitate + H2O. The protein operates within carbohydrate metabolism; tricarboxylic acid cycle; isocitrate from oxaloacetate: step 2/2. It participates in organic acid metabolism; propanoate degradation. In terms of biological role, involved in the catabolism of short chain fatty acids (SCFA) via the tricarboxylic acid (TCA)(acetyl degradation route) and probably via the 2-methylcitrate cycle I (propionate degradation route). Catalyzes the reversible isomerization of citrate to isocitrate via cis-aconitate. The apo form of AcnA functions as a RNA-binding regulatory protein which binds to selected IRE-like sequences present within the UTRs (untranslated regions) of 3' trxC and 5' IdeR mRNA. Could catalyze the hydration of 2-methyl-cis-aconitate to yield (2R,3S)-2-methylisocitrate. The chain is Aconitate hydratase A (acn) from Mycobacterium tuberculosis (strain ATCC 25618 / H37Rv).